A 952-amino-acid polypeptide reads, in one-letter code: Inter-alpha-trypsin inhibitor heavy chain H5 (952 aa).

A signal peptide spans 1–17 (MLLLLGLCLGLPLFSES). The 127-residue stretch at 35–161 (VPRQLRLLQR…KAAFFLSYEE (127 aa)) folds into the VIT domain. Residues Asn-97, Asn-127, Asn-136, and Asn-231 are each glycosylated (N-linked (GlcNAc...) asparagine). Basic and acidic residues predominate over residues 113-131 (QKDKKSSESVKDKRNRTSD). Residues 113–138 (QKDKKSSESVKDKRNRTSDDNEENGS) form a disordered region. The VWFA domain occupies 295-478 (NVVFVLDISA…AQLIGFYDEI (184 aa)). Asn-508, Asn-776, Asn-795, and Asn-862 each carry an N-linked (GlcNAc...) asparagine glycan. Positions 933–952 (ALGLSTPRKPETDRPHEESV) are disordered. A compositionally biased stretch (basic and acidic residues) spans 940 to 952 (RKPETDRPHEESV).

Belongs to the ITIH family.

It is found in the secreted. In terms of biological role, may act as a tumor suppressor. In Mus musculus (Mouse), this protein is Inter-alpha-trypsin inhibitor heavy chain H5 (Itih5).